The sequence spans 485 residues: Glutamyl-tRNA(Gln) amidotransferase subunit A (485 aa).

Catalysis depends on charge relay system residues K78 and S153. S177 acts as the Acyl-ester intermediate in catalysis.

It belongs to the amidase family. GatA subfamily. As to quaternary structure, heterotrimer of A, B and C subunits.

The enzyme catalyses L-glutamyl-tRNA(Gln) + L-glutamine + ATP + H2O = L-glutaminyl-tRNA(Gln) + L-glutamate + ADP + phosphate + H(+). Its function is as follows. Allows the formation of correctly charged Gln-tRNA(Gln) through the transamidation of misacylated Glu-tRNA(Gln) in organisms which lack glutaminyl-tRNA synthetase. The reaction takes place in the presence of glutamine and ATP through an activated gamma-phospho-Glu-tRNA(Gln). In Bacillus cereus (strain G9842), this protein is Glutamyl-tRNA(Gln) amidotransferase subunit A.